A 735-amino-acid chain; its full sequence is MWRVLFLLSGLGGLWMDSNFDSLPVQITVPEKIRSIIKEEIESQVSYKIVIEGKPYTANLMQKNFLSHNFRVYSYNGTGIMKPLDQDFQNFCHYQGYIEGYPKSVAMVSTCTGLRGLLQFENVSYGIEPLESSVGFEHVIYQVKHKKADVSLYNEKDIESRDLSFKLQSIEPQKDFAKYIEMHVVVEKQLYNHMGSGTTVVTQKIFQLIGLTNAIFVSLNITVILSSLELWIDENKIATTGDAKELLHTFLRWKRSYLVLRPHDVAFLLVYREKSNYVGATFQGKMCDANYAGGVLLHPRTISLESLAVILAQLLSLSMGIPYDDINQCQCSAAVCIMNPEAIHFSGVKIFSNCSIEDFAHFISKQKSQCLHNQPRLDPFFKQQAVCGNAKLEAGEECDCGTQQNCFLLGAKCCDTATCRFKAGSNCAEGPCCENCLFMSQERVCRPSFDECDLPEYCNGTSASCPENHFIQTGHPCGPNQWVCIDGVCMNGDKQCMDTFGGEAEFGPTECYSYLNSKTDVSGNCGIGDSGYTQCEADNLQCGKLICKYAGEFLLQIPRATIIYANISGHLCVAVEFASDHEDSHKMWIKDGTSCGSNKVCKNQRCVSSSYLGYDCTTDKCNHRGVCNNKKHCHCSASYLPPDCSVQSDTSPGGSIDSGNFPLVAVPARLPERRHMENVYHSKPMRWPLFLFIPFFIIFCVLIAIMVKVHFQRKKWRTEDYSTDEQPESESEPKG.

Positions 1–16 are cleaved as a signal peptide; it reads MWRVLFLLSGLGGLWM. The propeptide occupies 17–174; that stretch reads DSNFDSLPVQ…FKLQSIEPQK (158 aa). Residues 17 to 686 are Extracellular-facing; the sequence is DSNFDSLPVQ…ENVYHSKPMR (670 aa). 3 N-linked (GlcNAc...) asparagine glycosylation sites follow: Asn-76, Asn-122, and Asn-220. One can recognise a Peptidase M12B domain in the interval 178-375; sequence KYIEMHVVVE…QKSQCLHNQP (198 aa). Intrachain disulfides connect Cys-287–Cys-370, Cys-329–Cys-354, Cys-331–Cys-336, and Cys-445–Cys-465. 3 N-linked (GlcNAc...) asparagine glycosylation sites follow: Asn-353, Asn-459, and Asn-566. The region spanning 384–473 is the Disintegrin domain; that stretch reads QAVCGNAKLE…SCPENHFIQT (90 aa). In terms of domain architecture, EGF-like spans 612 to 645; sequence LGYDCTTDKCNHRGVCNNKKHCHCSASYLPPDCS. Intrachain disulfides connect Cys-616–Cys-627, Cys-621–Cys-633, and Cys-635–Cys-644. A helical transmembrane segment spans residues 687–707; it reads WPLFLFIPFFIIFCVLIAIMV. At 708 to 735 the chain is on the cytoplasmic side; that stretch reads KVHFQRKKWRTEDYSTDEQPESESEPKG. Ser-729 carries the post-translational modification Phosphoserine.

As to quaternary structure, heterodimer with ADAM1/fertilin subunit alpha. Post-translationally, the signal and the metalloprotease domain are cleaved during the epididymal maturation of the spermatozoa. As to expression, expressed specifically in testis.

Its subcellular location is the membrane. In terms of biological role, sperm surface membrane protein that may be involved in sperm-egg plasma membrane adhesion and fusion during fertilization. Could have a direct role in sperm-zona binding or migration of sperm from the uterus into the oviduct. Interactions with egg membrane could be mediated via binding between its disintegrin-like domain to one or more integrins receptors on the egg. This is a non catalytic metalloprotease-like protein. The protein is Disintegrin and metalloproteinase domain-containing protein 2 (ADAM2) of Macaca fascicularis (Crab-eating macaque).